Here is a 157-residue protein sequence, read N- to C-terminus: 2-C-methyl-D-erythritol 2,4-cyclodiphosphate synthase (157 aa).

2 residues coordinate a divalent metal cation: Asp-8 and His-10. 4-CDP-2-C-methyl-D-erythritol 2-phosphate contacts are provided by residues 8 to 10 and 34 to 35; these read DVH and HS. His-42 contacts a divalent metal cation. 4-CDP-2-C-methyl-D-erythritol 2-phosphate is bound by residues 56–58, 61–65, 100–106, 132–135, Phe-139, and Arg-142; these read DIG, FPDTD, AQAPKMA, and TTTE.

It belongs to the IspF family. In terms of assembly, homotrimer. A divalent metal cation is required as a cofactor.

The catalysed reaction is 4-CDP-2-C-methyl-D-erythritol 2-phosphate = 2-C-methyl-D-erythritol 2,4-cyclic diphosphate + CMP. The protein operates within isoprenoid biosynthesis; isopentenyl diphosphate biosynthesis via DXP pathway; isopentenyl diphosphate from 1-deoxy-D-xylulose 5-phosphate: step 4/6. Its function is as follows. Involved in the biosynthesis of isopentenyl diphosphate (IPP) and dimethylallyl diphosphate (DMAPP), two major building blocks of isoprenoid compounds. Catalyzes the conversion of 4-diphosphocytidyl-2-C-methyl-D-erythritol 2-phosphate (CDP-ME2P) to 2-C-methyl-D-erythritol 2,4-cyclodiphosphate (ME-CPP) with a corresponding release of cytidine 5-monophosphate (CMP). This chain is 2-C-methyl-D-erythritol 2,4-cyclodiphosphate synthase, found in Pseudomonas savastanoi pv. phaseolicola (strain 1448A / Race 6) (Pseudomonas syringae pv. phaseolicola (strain 1448A / Race 6)).